The sequence spans 137 residues: Putative pre-16S rRNA nuclease (137 aa).

This sequence belongs to the YqgF nuclease family.

Its subcellular location is the cytoplasm. Its function is as follows. Could be a nuclease involved in processing of the 5'-end of pre-16S rRNA. In Clostridium perfringens (strain ATCC 13124 / DSM 756 / JCM 1290 / NCIMB 6125 / NCTC 8237 / Type A), this protein is Putative pre-16S rRNA nuclease.